The following is a 440-amino-acid chain: Rhamnogalacturonase A (440 aa).

An N-terminal signal peptide occupies residues Met1–Gly18. An intrachain disulfide couples Cys39 to Cys65. N-linked (GlcNAc...) asparagine glycosylation is present at Asn50. Asp215 (proton donor) is an active-site residue. A disulfide bridge links Cys217 with Cys234. His290 is a catalytic residue. Asn317 is a glycosylation site (N-linked (GlcNAc...) asparagine). Intrachain disulfides connect Cys340-Cys346 and Cys368-Cys377. O-linked (Man) threonine glycosylation is present at Thr385. A glycan (O-linked (Man) serine) is linked at Ser386. Thr388, Thr389, and Thr390 each carry an O-linked (Man) threonine glycan. Ser391 carries O-linked (Man) serine glycosylation. O-linked (Man) threonine glycosylation is found at Thr392 and Thr394. 2 O-linked (Man) serine glycosylation sites follow: Ser398 and Ser401. O-linked (Man) threonine glycosylation is found at Thr403, Thr404, and Thr416. O-linked (Man) serine glycosylation is present at Ser418. Residues Thr423 and Thr426 are each glycosylated (O-linked (Man) threonine). O-linked (Man) serine glycans are attached at residues Ser427 and Ser436.

Belongs to the glycosyl hydrolase 28 family. The N-terminus is blocked. In terms of processing, N-glycosylated and may also be O-glycosylated.

It localises to the secreted. It catalyses the reaction Endohydrolysis of alpha-D-GalA-(1-&gt;2)-alpha-L-Rha glycosidic bond in the rhamnogalacturonan I backbone with initial inversion of anomeric configuration releasing oligosaccharides with beta-D-GalA at the reducing end.. Functionally, pectinolytic enzymes consist of four classes of enzymes: pectine lyase, polygalacturonase, pectin methylesterase and rhamnogalacturonase. Has a positive effect in the apple hot-mash liquefaction process. Hydrolyzes alpha-D-galacturonopyranosyl-(1,2)-alpha-L-rhamnopyranosyl linkages in the backbone of the hairy regions of pectins. This Aspergillus aculeatus protein is Rhamnogalacturonase A (rhgA).